Consider the following 147-residue polypeptide: MRTTYMAKPGEVERKWYVIDATDIALGRLSTVVASILRGKNKPTFTPNVDTGDNIIVINAEKIKLTGRKATDKLYHHHSNHPGGLKTRTAGEIRENNPERLIEMSVKGMLPKNSLGHNQFLKLHVYAGGEHKHQAQNPEVLDITDII.

This sequence belongs to the universal ribosomal protein uL13 family. As to quaternary structure, part of the 50S ribosomal subunit.

Functionally, this protein is one of the early assembly proteins of the 50S ribosomal subunit, although it is not seen to bind rRNA by itself. It is important during the early stages of 50S assembly. The polypeptide is Large ribosomal subunit protein uL13 (Latilactobacillus sakei subsp. sakei (strain 23K) (Lactobacillus sakei subsp. sakei)).